The chain runs to 186 residues: Ribosome-recycling factor (186 aa).

Belongs to the RRF family.

It is found in the cytoplasm. Functionally, responsible for the release of ribosomes from messenger RNA at the termination of protein biosynthesis. May increase the efficiency of translation by recycling ribosomes from one round of translation to another. This Burkholderia multivorans (strain ATCC 17616 / 249) protein is Ribosome-recycling factor.